Reading from the N-terminus, the 158-residue chain is Hypoxanthine DNA glycosylase (158 aa).

The active site involves N39.

The protein belongs to the uracil-DNA glycosylase (UDG) superfamily. Type 6 (HDG) family.

Excises hypoxanthine, a deamination product of adenine, from double-stranded DNA. Acts on double-stranded DNA containing G/I, T/I, A/I and C/I base pairs, but not on single-stranded inosine-containing DNA. Also has minor xanthine DNA glycosylase activity. Lacks any detectable uracil-DNA glycosylase activity. The sequence is that of Hypoxanthine DNA glycosylase from Methanosarcina barkeri (strain Fusaro / DSM 804).